Here is a 78-residue protein sequence, read N- to C-terminus: Large ribosomal subunit protein bL28 (78 aa).

The protein belongs to the bacterial ribosomal protein bL28 family.

The protein is Large ribosomal subunit protein bL28 of Prochlorococcus marinus (strain MIT 9301).